Consider the following 309-residue polypeptide: Tagatose-6-phosphate kinase (309 aa).

It belongs to the carbohydrate kinase PfkB family. LacC subfamily.

The enzyme catalyses D-tagatofuranose 6-phosphate + ATP = D-tagatofuranose 1,6-bisphosphate + ADP + H(+). Its pathway is carbohydrate metabolism; D-tagatose 6-phosphate degradation; D-glyceraldehyde 3-phosphate and glycerone phosphate from D-tagatose 6-phosphate: step 1/2. In Streptococcus pneumoniae serotype 4 (strain ATCC BAA-334 / TIGR4), this protein is Tagatose-6-phosphate kinase.